Consider the following 634-residue polypeptide: Kelch-like protein 22 (634 aa).

Ala-2 carries the post-translational modification N-acetylalanine. Residues Phe-50–Leu-117 form the BTB domain. 6 Kelch repeats span residues Cys-299–Asn-349, Phe-350–Arg-399, Tyr-400–Gly-446, Met-448–Asp-493, Lys-494–Thr-544, and Arg-545–Leu-593. Thr-463 is subject to Phosphothreonine. Tyr-466 is modified (phosphotyrosine). A disordered region spans residues Glu-600–Asp-634. The residue at position 605 (Thr-605) is a Phosphothreonine. The span at Asp-624–Asp-634 shows a compositional bias: acidic residues.

As to quaternary structure, component of the BCR(KLHL22) E3 ubiquitin ligase complex, at least composed of CUL3, KLHL22 and RBX1. Interacts with PLK1. Interacts with DEPDC5 (via DEP domain); the interaction depends on amino acid availability. Interacts with YWHAE; required for the nuclear localization of KLHL22 upon amino acid starvation.

Its subcellular location is the cytoplasm. It localises to the cytosol. The protein resides in the cytoskeleton. It is found in the microtubule organizing center. The protein localises to the centrosome. Its subcellular location is the spindle. It localises to the nucleus. The protein resides in the lysosome. The protein operates within protein modification; protein ubiquitination. In terms of biological role, substrate-specific adapter of a BCR (BTB-CUL3-RBX1) E3 ubiquitin ligase complex required for chromosome alignment and localization of PLK1 at kinetochores. The BCR(KLHL22) ubiquitin ligase complex mediates monoubiquitination of PLK1, leading to PLK1 dissociation from phosphoreceptor proteins and subsequent removal from kinetochores, allowing silencing of the spindle assembly checkpoint (SAC) and chromosome segregation. Monoubiquitination of PLK1 does not lead to PLK1 degradation. The BCR(KLHL22) ubiquitin ligase complex is also responsible for the amino acid-stimulated 'Lys-48' polyubiquitination and proteasomal degradation of DEPDC5. Through the degradation of DEPDC5, releases the GATOR1 complex-mediated inhibition of the TORC1 pathway. It is therefore an amino acid-dependent activator within the amino acid-sensing branch of the TORC1 pathway, indirectly regulating different cellular processes including cell growth and autophagy. The chain is Kelch-like protein 22 (KLHL22) from Ailuropoda melanoleuca (Giant panda).